The chain runs to 426 residues: 3-phosphoshikimate 1-carboxyvinyltransferase (426 aa).

3-phosphoshikimate contacts are provided by Lys-22, Ser-23, and Arg-27. Lys-22 lines the phosphoenolpyruvate pocket. The phosphoenolpyruvate site is built by Gly-96 and Arg-124. Positions 170, 171, 172, 198, 314, 337, and 341 each coordinate 3-phosphoshikimate. Phosphoenolpyruvate is bound at residue Gln-172. Asp-314 acts as the Proton acceptor in catalysis. Phosphoenolpyruvate is bound by residues Arg-345, Arg-387, and Lys-412.

It belongs to the EPSP synthase family. As to quaternary structure, monomer.

The protein localises to the cytoplasm. It carries out the reaction 3-phosphoshikimate + phosphoenolpyruvate = 5-O-(1-carboxyvinyl)-3-phosphoshikimate + phosphate. It functions in the pathway metabolic intermediate biosynthesis; chorismate biosynthesis; chorismate from D-erythrose 4-phosphate and phosphoenolpyruvate: step 6/7. Its function is as follows. Catalyzes the transfer of the enolpyruvyl moiety of phosphoenolpyruvate (PEP) to the 5-hydroxyl of shikimate-3-phosphate (S3P) to produce enolpyruvyl shikimate-3-phosphate and inorganic phosphate. The protein is 3-phosphoshikimate 1-carboxyvinyltransferase of Aliivibrio fischeri (strain MJ11) (Vibrio fischeri).